An 865-amino-acid polypeptide reads, in one-letter code: cGMP-specific 3',5'-cyclic phosphodiesterase (865 aa).

Serine 92 carries the phosphoserine modification. 2 consecutive GAF domains span residues 154-304 and 336-493; these read DVTA…GIVL and SLEV…GLGI. Positions 526–850 constitute a PDEase domain; sequence ETRELQALSA…QKWQALAEQQ (325 aa). Histidine 603 functions as the Proton donor in the catalytic mechanism. Zn(2+) contacts are provided by histidine 607, histidine 643, aspartate 644, and aspartate 754. Mg(2+) is bound at residue aspartate 644. Glutamine 807 is a binding site for 3',5'-cyclic GMP.

It belongs to the cyclic nucleotide phosphodiesterase family. The cofactor is Zn(2+). Requires Mg(2+) as cofactor. Phosphorylation is regulated by binding of cGMP to the two allosteric sites. Phosphorylation by PRKG1 leads to its activation.

The enzyme catalyses 3',5'-cyclic GMP + H2O = GMP + H(+). The protein operates within purine metabolism; 3',5'-cyclic GMP degradation; GMP from 3',5'-cyclic GMP: step 1/1. Its function is as follows. Plays a role in signal transduction by regulating the intracellular concentration of cyclic nucleotides. This phosphodiesterase catalyzes the specific hydrolysis of cGMP to 5'-GMP. Specifically regulates nitric-oxide-generated cGMP. This chain is cGMP-specific 3',5'-cyclic phosphodiesterase (Pde5a), found in Mus musculus (Mouse).